Reading from the N-terminus, the 141-residue chain is uncharacterized protein (141 aa).

Helical transmembrane passes span F20–A42 and L52–L74.

The protein localises to the cell membrane. This is an uncharacterized protein from Archaeoglobus fulgidus (strain ATCC 49558 / DSM 4304 / JCM 9628 / NBRC 100126 / VC-16).